A 373-amino-acid polypeptide reads, in one-letter code: 3 beta-hydroxysteroid dehydrogenase/Delta 5--&gt;4-isomerase type 2 (373 aa).

The active-site Proton acceptor is Tyr-155. Lys-159 serves as a coordination point for NAD(+). Residues 288–308 (VPLLYWLAFLLETVSFLLSPI) traverse the membrane as a helical segment.

It belongs to the 3-beta-HSD family. As to expression, liver and kidney.

The protein localises to the endoplasmic reticulum membrane. It localises to the mitochondrion membrane. The enzyme catalyses a 3beta-hydroxy-Delta(5)-steroid + NAD(+) = a 3-oxo-Delta(5)-steroid + NADH + H(+). The catalysed reaction is a 3-oxo-Delta(5)-steroid = a 3-oxo-Delta(4)-steroid. It catalyses the reaction pregnenolone + NAD(+) = pregn-5-ene-3,20-dione + NADH + H(+). It carries out the reaction pregn-5-ene-3,20-dione = progesterone. The enzyme catalyses 3beta-hydroxyandrost-5-en-17-one + NAD(+) = androst-5-ene-3,17-dione + NADH + H(+). The catalysed reaction is androst-5-ene-3,17-dione = androst-4-ene-3,17-dione. It participates in lipid metabolism; steroid biosynthesis. In terms of biological role, 3-beta-HSD is a bifunctional enzyme, that catalyzes the oxidative conversion of Delta(5)-ene-3-beta-hydroxy steroid, and the oxidative conversion of ketosteroids. The 3-beta-HSD enzymatic system plays a crucial role in the biosynthesis of all classes of hormonal steroids. This chain is 3 beta-hydroxysteroid dehydrogenase/Delta 5--&gt;4-isomerase type 2, found in Mus musculus (Mouse).